The following is a 203-amino-acid chain: Glutathione S-transferase (203 aa).

The 78-residue stretch at 2–79 (PDYKVYYFNV…YLANQVGLAG (78 aa)) folds into the GST N-terminal domain. Residues Tyr8, Trp39, Lys43, 49–51 (GQM), and 63–64 (QS) contribute to the glutathione site. A GST C-terminal domain is found at 81–203 (DDWENLMIDT…YIAKRPITEV (123 aa)).

The protein belongs to the GST superfamily. Sigma family. As to quaternary structure, homodimer.

The catalysed reaction is RX + glutathione = an S-substituted glutathione + a halide anion + H(+). In terms of biological role, conjugation of reduced glutathione to a wide number of exogenous and endogenous hydrophobic electrophiles. The polypeptide is Glutathione S-transferase (GstS1) (Anopheles gambiae (African malaria mosquito)).